Here is a 349-residue protein sequence, read N- to C-terminus: ATPase GET3 (349 aa).

26-33 contacts ATP; sequence KGGVGKTT. Asp57 is an active-site residue. 2 residues coordinate ATP: Glu240 and Asn267. Zn(2+)-binding residues include Cys280 and Cys283.

It belongs to the arsA ATPase family. As to quaternary structure, homodimer. Component of the Golgi to ER traffic (GET) complex, which is composed of GET1, GET2 and GET3. Within the complex, GET1 and GET2 form a heterotetramer which is stabilized by phosphatidylinositol binding and which binds to the GET3 homodimer. Interacts with the chloride channel protein GEF1.

It localises to the cytoplasm. The protein localises to the endoplasmic reticulum. It is found in the golgi apparatus. ATPase required for the post-translational delivery of tail-anchored (TA) proteins to the endoplasmic reticulum. Recognizes and selectively binds the transmembrane domain of TA proteins in the cytosol. This complex then targets to the endoplasmic reticulum by membrane-bound receptors GET1 and GET2, where the tail-anchored protein is released for insertion. This process is regulated by ATP binding and hydrolysis. ATP binding drives the homodimer towards the closed dimer state, facilitating recognition of newly synthesized TA membrane proteins. ATP hydrolysis is required for insertion. Subsequently, the homodimer reverts towards the open dimer state, lowering its affinity for the GET1-GET2 receptor, and returning it to the cytosol to initiate a new round of targeting. Cooperates with the HDEL receptor ERD2 to mediate the ATP-dependent retrieval of resident ER proteins that contain a C-terminal H-D-E-L retention signal from the Golgi to the ER. Involved in low-level resistance to the oxyanions arsenite and arsenate, and in heat tolerance. The chain is ATPase GET3 from Kluyveromyces lactis (strain ATCC 8585 / CBS 2359 / DSM 70799 / NBRC 1267 / NRRL Y-1140 / WM37) (Yeast).